The following is a 469-amino-acid chain: Actin-related protein 4 (469 aa).

Positions 104-136 (PERSTPPSKKGINISDDGDVPMEDDGNNNEDAT) are disordered. Residues 119-136 (DDGDVPMEDDGNNNEDAT) show a composition bias toward acidic residues.

It belongs to the actin family. ARP4 subfamily. In terms of assembly, component of the NuA4 histone acetyltransferase complex, of the INO80 chromatin remodeling complex, and of the SWR1 chromatin remodeling complex.

The protein resides in the nucleus. Chromatin interaction component of the NuA4 histone acetyltransferase complex which is involved in transcriptional activation of selected genes principally by acetylation of nucleosomal histone H4 and H2A. The NuA4 complex is also involved in DNA repair. Is required for NuA4 complex integrity. Component of the SWR1 complex which mediates the ATP-dependent exchange of histone H2A for the H2A variant H2A.Z leading to transcriptional regulation of selected genes by chromatin remodeling. Component of the INO80 complex which remodels chromatin by shifting nucleosomes and is involved in DNA repair. This Neurospora crassa (strain ATCC 24698 / 74-OR23-1A / CBS 708.71 / DSM 1257 / FGSC 987) protein is Actin-related protein 4 (arp-4).